Consider the following 396-residue polypeptide: Bifunctional enzyme Fae/Hps (396 aa).

The formaldehyde-activating enzyme stretch occupies residues 1 to 161 (MYQIGEALIG…YEKDRGVHAI (161 aa)). His-17 serves as the catalytic Proton donor. Residues Asp-19, Leu-48, Lys-66, Thr-68, and Gln-83 each coordinate substrate. Residues 162–396 (MGYKITRLWD…IDQYRIMTDF (235 aa)) are 3-hexulose-6-phosphate synthase.

In the N-terminal section; belongs to the formaldehyde-activating enzyme family. The protein in the C-terminal section; belongs to the HPS/KGPDC family. HPS subfamily.

The enzyme catalyses 5,6,7,8-tetrahydromethanopterin + formaldehyde = 5,10-methylenetetrahydromethanopterin + H2O. It carries out the reaction D-ribulose 5-phosphate + formaldehyde = D-arabino-hex-3-ulose 6-phosphate. Its pathway is carbohydrate biosynthesis; D-ribose 5-phosphate biosynthesis. Catalyzes the condensation of formaldehyde with tetrahydromethanopterin (H(4)MPT) to 5,10-methylenetetrahydromethanopterin. Functionally, catalyzes the reversible formation of ribulose-5-phosphate and formaldehyde from 3-hexulose-6-phosphate. This is Bifunctional enzyme Fae/Hps from Methanocella arvoryzae (strain DSM 22066 / NBRC 105507 / MRE50).